The sequence spans 221 residues: Flavin-dependent thymidylate synthase (221 aa).

A ThyX domain is found at 9–209; that stretch reads GFVKLLDHMG…PWTYESFIRY (201 aa). Residues Ser55, 78–80, and Glu86 each bind FAD; that span reads RHR. DUMP-binding positions include 75-78, 86-90, and Arg148; these read QWMR and ELSGR. The short motif at 78–88 is the ThyX motif element; that stretch reads RHRIASYNELS. FAD-binding positions include 164-166 and Asn170; that span reads NAR. DUMP is bound at residue Arg175. Arg175 acts as the Involved in ionization of N3 of dUMP, leading to its activation in catalysis.

Belongs to the thymidylate synthase ThyX family. In terms of assembly, homotetramer. The cofactor is FAD.

The enzyme catalyses dUMP + (6R)-5,10-methylene-5,6,7,8-tetrahydrofolate + NADPH + H(+) = dTMP + (6S)-5,6,7,8-tetrahydrofolate + NADP(+). It functions in the pathway pyrimidine metabolism; dTTP biosynthesis. Functionally, catalyzes the reductive methylation of 2'-deoxyuridine-5'-monophosphate (dUMP) to 2'-deoxythymidine-5'-monophosphate (dTMP) while utilizing 5,10-methylenetetrahydrofolate (mTHF) as the methyl donor, and NADPH and FADH(2) as the reductant. The sequence is that of Flavin-dependent thymidylate synthase from Pseudothermotoga lettingae (strain ATCC BAA-301 / DSM 14385 / NBRC 107922 / TMO) (Thermotoga lettingae).